The chain runs to 420 residues: Dachshund homolog dac-1 (420 aa).

A disordered region spans residues 23–77; the sequence is PSSSSSSSNNSSSNTSSSNFLSPYEYQESSTSPRDTTDSSGESSLSSSGSSSSLN. Composition is skewed to low complexity over residues 24-41 and 51-77; these read SSSS…SSSN and SSTS…SSLN. The DACHbox-N stretch occupies residues 85–171; the sequence is KLIKFRGHNV…LLKTSDFEKL (87 aa). Residues 242 to 258 are compositionally biased toward basic and acidic residues; it reads NSFERADDDDQNQRDAD. The tract at residues 242-321 is disordered; the sequence is NSFERADDDD…SSSSSGKNDE (80 aa). Over residues 263–273 the composition is skewed to polar residues; that stretch reads LNLSKSGGNSE. The span at 297–317 shows a compositional bias: low complexity; the sequence is GGSNSNSLSMSMEAGSSSSSG.

This sequence belongs to the DACH/dachshund family. In terms of tissue distribution, expressed in AFD, AWC, ASE and ASK neurons. Expressed in the alae.

The protein localises to the nucleus. Transcription factor. Plays a role in the thermotactic response. In Caenorhabditis elegans, this protein is Dachshund homolog dac-1.